Reading from the N-terminus, the 437-residue chain is Adenosylhomocysteinase (437 aa).

Residues Thr-54, Asp-130, and Glu-155 each coordinate substrate. Residue 156 to 158 participates in NAD(+) binding; sequence TTT. Positions 185 and 189 each coordinate substrate. NAD(+) contacts are provided by residues Asn-190, 219 to 224, Glu-242, Asn-277, 298 to 300, and Asn-345; these read GYGDVG and IGH.

This sequence belongs to the adenosylhomocysteinase family. Homotetramer. It depends on NAD(+) as a cofactor.

The protein resides in the cytoplasm. The enzyme catalyses S-adenosyl-L-homocysteine + H2O = L-homocysteine + adenosine. Its pathway is amino-acid biosynthesis; L-homocysteine biosynthesis; L-homocysteine from S-adenosyl-L-homocysteine: step 1/1. In terms of biological role, adenosylhomocysteine is a competitive inhibitor of S-adenosyl-L-methionine-dependent methyl transferase reactions; therefore adenosylhomocysteinase may play a key role in the control of methylations via regulation of the intracellular concentration of adenosylhomocysteine. The sequence is that of Adenosylhomocysteinase from Leishmania donovani.